The following is an 810-amino-acid chain: Phenylalanine--tRNA ligase beta subunit (810 aa).

In terms of domain architecture, tRNA-binding spans 39–150; the sequence is RTWANGVVVG…ENLPLGSDVR (112 aa). The B5 domain occupies 411–495; the sequence is TWSRSIFLRL…RLYGYDNFCD (85 aa). D473, D479, E482, and E483 together coordinate Mg(2+). The region spanning 716-809 is the FDX-ACB domain; the sequence is STYPASDRDI…LVEKFGVNLR (94 aa).

The protein belongs to the phenylalanyl-tRNA synthetase beta subunit family. Type 1 subfamily. In terms of assembly, tetramer of two alpha and two beta subunits. Mg(2+) serves as cofactor.

It localises to the cytoplasm. The enzyme catalyses tRNA(Phe) + L-phenylalanine + ATP = L-phenylalanyl-tRNA(Phe) + AMP + diphosphate + H(+). The chain is Phenylalanine--tRNA ligase beta subunit from Trichormus variabilis (strain ATCC 29413 / PCC 7937) (Anabaena variabilis).